A 652-amino-acid polypeptide reads, in one-letter code: uncharacterized protein (652 aa).

The span at 1 to 13 (MSVTESKAKTERK) shows a compositional bias: basic and acidic residues. The segment at 1–21 (MSVTESKAKTERKSSRKPAKT) is disordered.

This sequence belongs to the ParB family.

This is an uncharacterized protein from Escherichia coli (strain K12).